The primary structure comprises 131 residues: MALTDPLGDLLTRIRNGQRARKDSVLSPASKLRARVLDVLQREGYIRGYSEEDLAGHSGLRIELKYFEGQPAIQHVARVSKPGRRVYSGSKDLPRVRNGLGITIVSTPRGVLSDAEAREQNVGGEVLAEVF.

This sequence belongs to the universal ribosomal protein uS8 family. Part of the 30S ribosomal subunit. Contacts proteins S5 and S12.

In terms of biological role, one of the primary rRNA binding proteins, it binds directly to 16S rRNA central domain where it helps coordinate assembly of the platform of the 30S subunit. This is Small ribosomal subunit protein uS8 from Rhizorhabdus wittichii (strain DSM 6014 / CCUG 31198 / JCM 15750 / NBRC 105917 / EY 4224 / RW1) (Sphingomonas wittichii).